A 771-amino-acid polypeptide reads, in one-letter code: DNA helicase/primase complex-associated protein (771 aa).

It belongs to the herpesviridae HEPA family. As to quaternary structure, associates with the primase and the helicase to form the helicase-primase complex. Interacts with the origin-binding protein. Interacts with the polymerase catalytic subunit.

The protein localises to the host nucleus. Functionally, component of the helicase/primase complex. Unwinds the DNA at the replication forks and generates single-stranded DNA for both leading and lagging strand synthesis. The primase synthesizes short RNA primers on the lagging strand that the polymerase presumably elongates using dNTPs. The primase-associated factor has no known catalytic activity in the complex and may serve to facilitate the formation of the replisome by directly interacting with the origin-binding protein and the polymerase. In Varicella-zoster virus (strain Oka vaccine) (HHV-3), this protein is DNA helicase/primase complex-associated protein.